Here is a 225-residue protein sequence, read N- to C-terminus: Urease accessory protein UreG (225 aa).

25-32 (GPVGAGKT) lines the GTP pocket.

Belongs to the SIMIBI class G3E GTPase family. UreG subfamily. Homodimer. UreD, UreF and UreG form a complex that acts as a GTP-hydrolysis-dependent molecular chaperone, activating the urease apoprotein by helping to assemble the nickel containing metallocenter of UreC. The UreE protein probably delivers the nickel.

The protein localises to the cytoplasm. In terms of biological role, facilitates the functional incorporation of the urease nickel metallocenter. This process requires GTP hydrolysis, probably effectuated by UreG. The protein is Urease accessory protein UreG of Haemophilus influenzae (strain 86-028NP).